The primary structure comprises 325 residues: E3 ubiquitin-protein ligase EL5 (325 aa).

A disordered region spans residues 1-29 (MVRGVEQGGPAMDESSSSSSPSPVSAPAG). The span at 15–28 (SSSSSSPSPVSAPA) shows a compositional bias: low complexity. The chain crosses the membrane as a helical span at residues 38–58 (IATVAAVLIVFAALTLAFVLL). Positions 70–105 (TTTSTSGRGRRPRPRRRSGSGGDGGTGGGVDPEVLR) are disordered. Residues 77 to 87 (RGRRPRPRRRS) are compositionally biased toward basic residues. Gly residues predominate over residues 88–99 (GSGGDGGTGGGV). The segment at 134-176 (CAVCLAELEDGEEARFLPRCGHGFHAECVDMWLGSHSTCPLCR) adopts an RING-type; atypical zinc-finger fold. Disordered stretches follow at residues 267-289 (GAAGSTSSCSCATGGDNDDGDVE) and 303-325 (AATPARPPEAEAGARTAAAHVRN). Residues 268 to 281 (AAGSTSSCSCATGG) are compositionally biased toward low complexity.

It localises to the cell membrane. The catalysed reaction is S-ubiquitinyl-[E2 ubiquitin-conjugating enzyme]-L-cysteine + [acceptor protein]-L-lysine = [E2 ubiquitin-conjugating enzyme]-L-cysteine + N(6)-ubiquitinyl-[acceptor protein]-L-lysine.. It participates in protein modification; protein ubiquitination. Functionally, functions as an E3 ubiquitin-protein ligase in cooperation with the E2 ubiquitin conjugating enzymes UBC5A and UBC5B. Involved in root development. Required for the maintenance of cell viability after the initiation of root primordial formation. May mediate the degradation of cytotoxic proteins produced in root cells after the actions of auxin, cytokinin and jasmonic acid. Mediates 'Lys-48'-linked polyubiquitination of MBP in vitro. The sequence is that of E3 ubiquitin-protein ligase EL5 (EL5.1) from Oryza sativa subsp. japonica (Rice).